A 302-amino-acid polypeptide reads, in one-letter code: Protein KTI12 homolog (302 aa).

8-15 (GQPCSGKS) is an ATP binding site. The segment at 260 to 273 (LRRTFVKLMGQSSL) is calmodulin-binding.

This sequence belongs to the KTI12 family. Interacts with the elongator complex. Binds to calmodulin in a calcium-dependent manner. In terms of tissue distribution, expressed in roots, hypocotyls, cotyledons, shoot apices, stems, inflorescence apices, leaves and flowers.

It localises to the cytoplasm. The protein localises to the nucleus. In terms of biological role, elongator complex-associated factor that is not a structural subunit but rather transiently contacts the complex. Regulates both meristem activity and organ growth; acts as a positive regulator of adaxial leaf patterning by modulating both cell division and differentiation. Required for an early step in synthesis of 5-carbamoylmethyl (ncm5) groups present on uridines (ncm5U) at the wobble position in tRNA. The protein is Protein KTI12 homolog of Arabidopsis thaliana (Mouse-ear cress).